Here is a 490-residue protein sequence, read N- to C-terminus: Glutamate--tRNA ligase (490 aa).

Residues 9 to 19 (PSPTGLQHIGG) carry the 'HIGH' region motif. The short motif at 251 to 255 (KLSKR) is the 'KMSKS' region element. ATP is bound at residue Lys-254.

Belongs to the class-I aminoacyl-tRNA synthetase family. Glutamate--tRNA ligase type 1 subfamily. Monomer.

It localises to the cytoplasm. The catalysed reaction is tRNA(Glu) + L-glutamate + ATP = L-glutamyl-tRNA(Glu) + AMP + diphosphate. Catalyzes the attachment of glutamate to tRNA(Glu) in a two-step reaction: glutamate is first activated by ATP to form Glu-AMP and then transferred to the acceptor end of tRNA(Glu). The chain is Glutamate--tRNA ligase from Borreliella burgdorferi (strain ATCC 35210 / DSM 4680 / CIP 102532 / B31) (Borrelia burgdorferi).